We begin with the raw amino-acid sequence, 58 residues long: MKSSFVTRRFSWCRNIYYASAAAADSGREVCTFTGSMTQVKFSVFCDAEDDHSSNQIM.

This is an uncharacterized protein from Sinorhizobium fredii (strain NBRC 101917 / NGR234).